A 231-amino-acid polypeptide reads, in one-letter code: Probable GTP-binding protein EngB (231 aa).

Residues 51 to 231 enclose the EngB-type G domain; sequence DLSEIAFAGR…RAQLAALASP (181 aa). GTP is bound by residues 59 to 66, 86 to 90, 109 to 112, 176 to 179, and 210 to 212; these read GRSNVGKS, GRTQE, DLPG, TKAD, and TSS. Mg(2+) is bound by residues Ser66 and Thr88.

It belongs to the TRAFAC class TrmE-Era-EngA-EngB-Septin-like GTPase superfamily. EngB GTPase family. The cofactor is Mg(2+).

In terms of biological role, necessary for normal cell division and for the maintenance of normal septation. This is Probable GTP-binding protein EngB from Rhodospirillum rubrum (strain ATCC 11170 / ATH 1.1.1 / DSM 467 / LMG 4362 / NCIMB 8255 / S1).